A 585-amino-acid chain; its full sequence is Auxin response factor 17 (585 aa).

Residues 119–221 constitute a DNA-binding region (TF-B3); the sequence is FAKILTPSDA…EMFIGVRRTP (103 aa). Disordered stretches follow at residues 483 to 517 and 535 to 585; these read EMMN…RGPL and EHSE…SSQG. A compositionally biased stretch (low complexity) spans 488-510; the sequence is GSPPSDNLSPNSNTTNLSSGNDL. The segment covering 573–585 has biased composition (polar residues); the sequence is KHSNSNAGSSSQG.

Belongs to the ARF family. Homo and heterodimers.

It localises to the nucleus. Functionally, auxin response factors (ARFs) are transcriptional factors that bind specifically to the DNA sequence 5'-TGTCTC-3' found in the auxin-responsive promoter elements (AuxREs). Could act as transcriptional activator or repressor. Formation of heterodimers with Aux/IAA proteins may alter their ability to modulate early auxin response genes expression. In Arabidopsis thaliana (Mouse-ear cress), this protein is Auxin response factor 17 (ARF17).